We begin with the raw amino-acid sequence, 258 residues long: Ubiquinone/menaquinone biosynthesis C-methyltransferase UbiE (258 aa).

S-adenosyl-L-methionine contacts are provided by residues threonine 83, aspartate 104, and 130–131 (DA).

This sequence belongs to the class I-like SAM-binding methyltransferase superfamily. MenG/UbiE family.

It catalyses the reaction a 2-demethylmenaquinol + S-adenosyl-L-methionine = a menaquinol + S-adenosyl-L-homocysteine + H(+). The catalysed reaction is a 2-methoxy-6-(all-trans-polyprenyl)benzene-1,4-diol + S-adenosyl-L-methionine = a 5-methoxy-2-methyl-3-(all-trans-polyprenyl)benzene-1,4-diol + S-adenosyl-L-homocysteine + H(+). It functions in the pathway quinol/quinone metabolism; menaquinone biosynthesis; menaquinol from 1,4-dihydroxy-2-naphthoate: step 2/2. It participates in cofactor biosynthesis; ubiquinone biosynthesis. Methyltransferase required for the conversion of demethylmenaquinol (DMKH2) to menaquinol (MKH2) and the conversion of 2-polyprenyl-6-methoxy-1,4-benzoquinol (DDMQH2) to 2-polyprenyl-3-methyl-6-methoxy-1,4-benzoquinol (DMQH2). The polypeptide is Ubiquinone/menaquinone biosynthesis C-methyltransferase UbiE (Bordetella bronchiseptica (strain ATCC BAA-588 / NCTC 13252 / RB50) (Alcaligenes bronchisepticus)).